The sequence spans 515 residues: 4-hydroxybenzoate brominase (decarboxylating) (515 aa).

The FAD site is built by S13, E32, V40, F41, H51, V102, and Q364.

The protein belongs to the FMO family. The cofactor is FAD.

It carries out the reaction 2 bromide + 4-hydroxybenzoate + 2 NADPH + 2 O2 + 5 H(+) = 2,4-dibromophenol + CO2 + 2 NADP(+) + 4 H2O. The enzyme catalyses bromide + 4-hydroxybenzoate + NADPH + O2 + 2 H(+) = 3-bromo-4-hydroxybenzoate + NADP(+) + 2 H2O. It catalyses the reaction 3-bromo-4-hydroxybenzoate + bromide + NADPH + O2 + 3 H(+) = 2,4-dibromophenol + CO2 + NADP(+) + 2 H2O. The catalysed reaction is 3,4-dihydroxybenzoate + 2 bromide + 2 NADPH + 2 O2 + 5 H(+) = 3,5-dibromobenzene-1,2-diol + CO2 + 2 NADP(+) + 4 H2O. It carries out the reaction 3,4-dihydroxybenzoate + bromide + NADPH + O2 + 2 H(+) = 3-bromo-4,5-dihydroxybenzoate + NADP(+) + 2 H2O. The enzyme catalyses 3-bromo-4,5-dihydroxybenzoate + bromide + NADPH + O2 + 3 H(+) = 3,5-dibromobenzene-1,2-diol + CO2 + NADP(+) + 2 H2O. With respect to regulation, activity is abolished in the absence of either bromide or NADPH, while a partial reduction in activity is observed upon omission of FAD. Activity does not require the addition of a flavin reductase to regenerate FADH(2) in situ. Its function is as follows. Brominase involved in the biosynthesis of polybrominated aromatic organic compounds. Catalyzes the bromination of 4-hydroxybenzoate (4-HBA) to 3-bromo-4-hydroxybenzoate, followed by bromination and decarboxylation of 3-bromo-4-hydroxybenzoate to 2,4-dibromophenol. Can also use 3,4-dihydroxybenzoate, with lower efficiency, forming 3-bromo-4,5-dihydroxybenzoate and 3,5-dibromobenzene-1,2-diol. Can utilize iodide in vivo leading to the formation of iodophenols, but cannot use chloride. This Pseudoalteromonas luteoviolacea (strain 2ta16) protein is 4-hydroxybenzoate brominase (decarboxylating).